The following is a 455-amino-acid chain: Probable glycine dehydrogenase (decarboxylating) subunit 1 (455 aa).

This sequence belongs to the GcvP family. N-terminal subunit subfamily. The glycine cleavage system is composed of four proteins: P, T, L and H. In this organism, the P 'protein' is a heterodimer of two subunits.

It catalyses the reaction N(6)-[(R)-lipoyl]-L-lysyl-[glycine-cleavage complex H protein] + glycine + H(+) = N(6)-[(R)-S(8)-aminomethyldihydrolipoyl]-L-lysyl-[glycine-cleavage complex H protein] + CO2. Functionally, the glycine cleavage system catalyzes the degradation of glycine. The P protein binds the alpha-amino group of glycine through its pyridoxal phosphate cofactor; CO(2) is released and the remaining methylamine moiety is then transferred to the lipoamide cofactor of the H protein. The polypeptide is Probable glycine dehydrogenase (decarboxylating) subunit 1 (Francisella philomiragia subsp. philomiragia (strain ATCC 25017 / CCUG 19701 / FSC 153 / O#319-036)).